Here is a 101-residue protein sequence, read N- to C-terminus: Putative pterin-4-alpha-carbinolamine dehydratase (101 aa).

This sequence belongs to the pterin-4-alpha-carbinolamine dehydratase family.

The catalysed reaction is (4aS,6R)-4a-hydroxy-L-erythro-5,6,7,8-tetrahydrobiopterin = (6R)-L-erythro-6,7-dihydrobiopterin + H2O. The sequence is that of Putative pterin-4-alpha-carbinolamine dehydratase from Rhizobium johnstonii (strain DSM 114642 / LMG 32736 / 3841) (Rhizobium leguminosarum bv. viciae).